Reading from the N-terminus, the 796-residue chain is Polyribonucleotide nucleotidyltransferase (796 aa).

Mg(2+) is bound by residues aspartate 490 and aspartate 496. The KH domain maps to proline 557–isoleucine 616. An S1 motif domain is found at glycine 626 to arginine 693. Low complexity-rich tracts occupy residues aspartate 717–phenylalanine 728, glycine 747–glycine 759, and serine 769–arginine 784. Positions aspartate 717–phenylalanine 796 are disordered. Positions asparagine 785–phenylalanine 796 are enriched in basic and acidic residues.

The protein belongs to the polyribonucleotide nucleotidyltransferase family. Mg(2+) serves as cofactor.

The protein localises to the cytoplasm. The enzyme catalyses RNA(n+1) + phosphate = RNA(n) + a ribonucleoside 5'-diphosphate. Involved in mRNA degradation. Catalyzes the phosphorolysis of single-stranded polyribonucleotides processively in the 3'- to 5'-direction. The chain is Polyribonucleotide nucleotidyltransferase from Ehrlichia chaffeensis (strain ATCC CRL-10679 / Arkansas).